The primary structure comprises 111 residues: Parvalbumin alpha (111 aa).

Thr1 carries the N-acetylthreonine; in form C2 modification. EF-hand domains lie at 40 to 75 and 79 to 111; these read KPDDTLKEVFGILDQDKSGYIEEEELKFVLKGFAAG and LTANETKALLKAGDQDGDDKIGVDEFTNLVKAA. Ca(2+) contacts are provided by Asp53, Asp55, Ser57, Tyr59, Glu61, Glu64, Asp92, Asp94, Asp96, Lys98, and Glu103.

The protein belongs to the parvalbumin family. In terms of processing, acetylation of Thr-1 converts C1 to C2.

Functionally, in muscle, parvalbumin is thought to be involved in relaxation after contraction. It binds two calcium ions. The sequence is that of Parvalbumin alpha from Latimeria chalumnae (Coelacanth).